Consider the following 881-residue polypeptide: Putative cation exchanger C521.04c (881 aa).

Positions 1–19 (MSQPADINQSESSAETITQ) are enriched in polar residues. Disordered regions lie at residues 1-39 (MSQPADINQSESSAETITQGRRADRPEETPSSSVYEQNL) and 52-142 (ADAT…LRSE). Basic and acidic residues predominate over residues 63-77 (NDRDIYSPREIDQYT). The span at 83 to 95 (RTDPSTSTISNAR) shows a compositional bias: polar residues. A compositionally biased stretch (low complexity) spans 99-113 (RNSVSRLSRSSSNVR). Serine 129 is subject to Phosphoserine. The next 8 helical transmembrane spans lie at 200-220 (IWLICFGAPLFLVIFICYIFF), 329-349 (LIIAPTLLITSAICMFTIFFV), 407-427 (IYIIYFDMLALIIPTIFFGFF), 438-458 (VFLFTASLVSIIPLAYFIGMA), 471-491 (GAFINAFFGSVIEVFLYSVAL), 504-524 (IGSILAGLLLMPGLSMCAGAI), 537-557 (GATSTMLLFAVLGAFAPTMLF), and 594-614 (LPFTYCCSIMLVLAYAIGLWF). Positions 641-717 (VGEPVNQDTA…SQNSHGDDAP (77 aa)) are disordered. A compositionally biased stretch (polar residues) spans 646-657 (NQDTAGNMSDSS). Residues 678-688 (SSGLSSNGSEN) show a composition bias toward low complexity. The next 5 membrane-spanning stretches (helical) occupy residues 726–746 (IILLSATFLYSLIAEILVEHV), 762–782 (LTLFALVPNTTEFMNAISFAL), 794–814 (SAYALQVCLLQIPCLMGYSLF), 828–848 (LFTMVFPTWDMICVMICVFLL), and 859–879 (YFKGSILVLAYLVSMLGFTFF).

Belongs to the Ca(2+):cation antiporter (CaCA) (TC 2.A.19) family.

The protein localises to the endoplasmic reticulum membrane. In terms of biological role, putative cation exchanger. The sequence is that of Putative cation exchanger C521.04c from Schizosaccharomyces pombe (strain 972 / ATCC 24843) (Fission yeast).